Reading from the N-terminus, the 374-residue chain is Pectate lyase 3 (374 aa).

Residues 1-22 form the signal peptide; the sequence is MKYLLPSAAAGLLLLAAQPTMA. Residues cysteine 93 and cysteine 176 are joined by a disulfide bond. Ca(2+) is bound by residues aspartate 150, aspartate 152, glutamate 187, and aspartate 191. The active site involves arginine 239. A disulfide bridge connects residues cysteine 350 and cysteine 373.

Belongs to the polysaccharide lyase 1 family. PLADES subfamily. Ca(2+) is required as a cofactor.

The protein localises to the secreted. The enzyme catalyses Eliminative cleavage of (1-&gt;4)-alpha-D-galacturonan to give oligosaccharides with 4-deoxy-alpha-D-galact-4-enuronosyl groups at their non-reducing ends.. Its pathway is glycan metabolism; pectin degradation; 2-dehydro-3-deoxy-D-gluconate from pectin: step 2/5. Functionally, involved in maceration and soft-rotting of plant tissue. The chain is Pectate lyase 3 (pel3) from Pectobacterium carotovorum (Erwinia carotovora).